Consider the following 390-residue polypeptide: 3-ketosteroid-9-alpha-monooxygenase, oxygenase component (390 aa).

Positions 32-134 (WHCLGLLRDF…TLERNGQLYV (103 aa)) constitute a Rieske domain. 4 residues coordinate [2Fe-2S] cluster: cysteine 73, histidine 75, cysteine 92, and histidine 95. Asparagine 181, histidine 187, histidine 192, and aspartate 311 together coordinate Fe cation.

As to quaternary structure, homotrimer. The two-component system 3-ketosteroid-9-alpha-monooxygenase is composed of an oxygenase component KshA and a reductase component KshB. The cofactor is [2Fe-2S] cluster. Requires Fe cation as cofactor.

The catalysed reaction is androsta-1,4-diene-3,17-dione + 2 reduced [2Fe-2S]-[ferredoxin] + O2 + 2 H(+) = 9alpha-hydroxyandrosta-1,4-diene-3,17-dione + 2 oxidized [2Fe-2S]-[ferredoxin] + H2O. Its pathway is steroid metabolism; cholesterol degradation. Functionally, probably involved in the degradation of cholesterol. In vitro, catalyzes the introduction of a 9alpha-hydroxyl moiety into the ring B of 3-ketosteroid substrates such as 1,4-androstadiene-3,17-dione (ADD), 4-androstene-3,17-dione (AD), 4-androstene-17beta-ol-3-one (testosterone), 4-pregnene-3,20-dione (progesterone), 19-nor-4-androstene-3,17-dione, 1-(5alpha)-androstene-3,17-dione, 5alpha-androstane-3,17-dione, 5beta-androstane-3,17-dione, 5alpha-androstane-17beta-ol-3-one (stanolon), 11beta-hydrocortisone, 3-oxo-23,24-bisnorcholesta-4-en-22-oate (4-BNC), 23,24-bisnorcholesta-4-ene-22-oate, 3-oxo-23,24-bisnorcholesta-1,4-dien-22-oate (1,4-BNC) and 3-oxo-23,24-bisnorcholesta-1,4-dien-22-oyl-coenzyme A thioester (1,4-BNC-CoA). KshA5 has the broadest substrate range without a clear substrate preference and is active with Delta-4, Delta-1,4, 5alpha-H and 5beta-H steroids, as well as with steroids having bulky aliphatic side chains and an isopropionyl side chain at C17. This chain is 3-ketosteroid-9-alpha-monooxygenase, oxygenase component, found in Rhodococcus rhodochrous.